The sequence spans 93 residues: Acylphosphatase (93 aa).

One can recognise an Acylphosphatase-like domain in the interval R6–R93. Active-site residues include R21 and N40.

Belongs to the acylphosphatase family.

It carries out the reaction an acyl phosphate + H2O = a carboxylate + phosphate + H(+). This chain is Acylphosphatase (acyP), found in Streptomyces coelicolor (strain ATCC BAA-471 / A3(2) / M145).